Here is a 131-residue protein sequence, read N- to C-terminus: Large ribosomal subunit protein bL19 (131 aa).

Residues M1–P11 are compositionally biased toward polar residues. The tract at residues M1–A20 is disordered.

This sequence belongs to the bacterial ribosomal protein bL19 family.

Functionally, this protein is located at the 30S-50S ribosomal subunit interface and may play a role in the structure and function of the aminoacyl-tRNA binding site. This Dehalococcoides mccartyi (strain ATCC BAA-2100 / JCM 16839 / KCTC 5957 / BAV1) protein is Large ribosomal subunit protein bL19.